The primary structure comprises 432 residues: uncharacterized protein (432 aa).

Lysine 243 bears the N6-(pyridoxal phosphate)lysine mark.

The protein belongs to the class-II pyridoxal-phosphate-dependent aminotransferase family. The cofactor is pyridoxal 5'-phosphate.

The protein localises to the cytoplasm. This is an uncharacterized protein from Methanocaldococcus jannaschii (strain ATCC 43067 / DSM 2661 / JAL-1 / JCM 10045 / NBRC 100440) (Methanococcus jannaschii).